The following is a 1086-amino-acid chain: Endo-1,4-beta-xylanase C (1086 aa).

A signal peptide spans 1 to 31 (MRGKWLRLCLAAVLIVSLLPGLGAGEWKASA). CBM-cenC domains follow at residues 35-183 (GDIL…IRLV) and 197-359 (GQAL…ITAT). A GH10 domain is found at 365-710 (EKNIPDLAKK…KPAYWALVDP (346 aa)). The active-site Proton donor is the E502. Residue D556 is part of the active site. Catalysis depends on E620, which acts as the Nucleophile.

Belongs to the glycosyl hydrolase 10 (cellulase F) family.

The enzyme catalyses Endohydrolysis of (1-&gt;4)-beta-D-xylosidic linkages in xylans.. Its pathway is glycan degradation; xylan degradation. Functionally, endoxylanase with high hydrolytic activity on birchwood and oat spelt xylan. Xylotetraose, xylotriose, xylobiose and xylose are the main products from birchwood xylan hydrolysis. Shows increasing activity on xylo-oligosaccharides of increasing length. Displays very low hydrolytic activity on Avicel, carboxymethylcellulose (CMC) and p-nitrophenyl-beta-xylopyranoside. Also shows transxylosidase activity, allowing the formation of xylo-oligosaccharides of higher degree of polymerization than the starting substrate. The chain is Endo-1,4-beta-xylanase C (xynC) from Paenibacillus barcinonensis.